The primary structure comprises 470 residues: Cell division protein FtsP (470 aa).

A signal peptide (tat-type signal) is located at residues 1–27 (MSFSRRQFLQASGIALCAGAIPLRANA). Residues 222–287 (VEVSRGWVRL…RREILVDMTN (66 aa)) form the Plastocyanin-like domain.

The protein belongs to the FtsP family. Post-translationally, predicted to be exported by the Tat system. The position of the signal peptide cleavage has not been experimentally proven.

The protein localises to the periplasm. In terms of biological role, cell division protein that is required for growth during stress conditions. May be involved in protecting or stabilizing the divisomal assembly under conditions of stress. This chain is Cell division protein FtsP, found in Salmonella typhi.